The sequence spans 520 residues: Probable protein phosphatase 2C 39 (520 aa).

The 348-residue stretch at 160-507 (FLTSTEIKMA…DDVTIIVIIL (348 aa)) folds into the PPM-type phosphatase domain. Positions 195, 196, 435, and 498 each coordinate Mn(2+).

Belongs to the PP2C family. Mg(2+) is required as a cofactor. Requires Mn(2+) as cofactor.

It catalyses the reaction O-phospho-L-seryl-[protein] + H2O = L-seryl-[protein] + phosphate. The catalysed reaction is O-phospho-L-threonyl-[protein] + H2O = L-threonyl-[protein] + phosphate. The protein is Probable protein phosphatase 2C 39 of Oryza sativa subsp. japonica (Rice).